The following is a 148-amino-acid chain: Small ribosomal subunit protein bS16 (148 aa).

The interval 107 to 148 (AAARAAAGAEDRPATTPKKAKKAASADGADAPAADAPTAAGQ) is disordered. Residues 129–148 (AASADGADAPAADAPTAAGQ) show a composition bias toward low complexity.

The protein belongs to the bacterial ribosomal protein bS16 family.

This Frankia alni (strain DSM 45986 / CECT 9034 / ACN14a) protein is Small ribosomal subunit protein bS16.